A 331-amino-acid chain; its full sequence is Spondin-2 (331 aa).

Residues 1–26 form the signal peptide; sequence MENPSPAAALGKALCALLLATLGAAG. The Spondin domain occupies 31–221; it reads GESICSARAL…EITSSSPSHP (191 aa). Residues Cys35 and Cys171 are joined by a disulfide bond. Glu141 provides a ligand contact to a divalent metal cation. Ca(2+) contacts are provided by Asp160, Asp188, and Asp192. Positions 277-331 constitute a TSP type-1 domain; it reads DCEVSLWSSWGLCGGHCGRLGTKSRTRYVRVQPANNGSPCPELEEEAECVPDNCV. Trp283 carries C-linked (Man) tryptophan glycosylation.

In terms of assembly, monomer. Interacts with integrin. In terms of tissue distribution, expressed in normal lung tissue but not in lung carcinoma cell lines.

The protein resides in the secreted. The protein localises to the extracellular space. It localises to the extracellular matrix. In terms of biological role, cell adhesion protein that promotes adhesion and outgrowth of hippocampal embryonic neurons. Binds directly to bacteria and their components and functions as an opsonin for macrophage phagocytosis of bacteria. Essential in the initiation of the innate immune response and represents a unique pattern-recognition molecule in the ECM for microbial pathogens. Binds bacterial lipopolysaccharide (LPS). This chain is Spondin-2 (SPON2), found in Homo sapiens (Human).